The primary structure comprises 265 residues: 2-C-methyl-D-erythritol 4-phosphate cytidylyltransferase (265 aa).

Basic and acidic residues predominate over residues 231-241 (DRGGASREAER). The disordered stretch occupies residues 231–265 (DRGGASREAERSAMPSAATSVFSGARSAASGSEEV). Residues 253 to 265 (SGARSAASGSEEV) are compositionally biased toward low complexity.

This sequence belongs to the IspD/TarI cytidylyltransferase family. IspD subfamily.

The enzyme catalyses 2-C-methyl-D-erythritol 4-phosphate + CTP + H(+) = 4-CDP-2-C-methyl-D-erythritol + diphosphate. Its pathway is isoprenoid biosynthesis; isopentenyl diphosphate biosynthesis via DXP pathway; isopentenyl diphosphate from 1-deoxy-D-xylulose 5-phosphate: step 2/6. In terms of biological role, catalyzes the formation of 4-diphosphocytidyl-2-C-methyl-D-erythritol from CTP and 2-C-methyl-D-erythritol 4-phosphate (MEP). The protein is 2-C-methyl-D-erythritol 4-phosphate cytidylyltransferase of Xanthomonas campestris pv. campestris (strain B100).